The primary structure comprises 432 residues: Glutamyl-tRNA reductase (432 aa).

Residues 55–58 (TCNR), Ser114, 119–121 (ETQ), and Gln125 each bind substrate. The active-site Nucleophile is Cys56. 194-199 (GAGEMI) lines the NADP(+) pocket.

It belongs to the glutamyl-tRNA reductase family. As to quaternary structure, homodimer.

The catalysed reaction is (S)-4-amino-5-oxopentanoate + tRNA(Glu) + NADP(+) = L-glutamyl-tRNA(Glu) + NADPH + H(+). The protein operates within porphyrin-containing compound metabolism; protoporphyrin-IX biosynthesis; 5-aminolevulinate from L-glutamyl-tRNA(Glu): step 1/2. Catalyzes the NADPH-dependent reduction of glutamyl-tRNA(Glu) to glutamate 1-semialdehyde (GSA). The protein is Glutamyl-tRNA reductase of Burkholderia ambifaria (strain MC40-6).